The following is a 507-amino-acid chain: Histidine ammonia-lyase (507 aa).

A cross-link (5-imidazolinone (Ala-Gly)) is located at residues 141–143 (ASG). Ser142 carries the post-translational modification 2,3-didehydroalanine (Ser).

It belongs to the PAL/histidase family. Contains an active site 4-methylidene-imidazol-5-one (MIO), which is formed autocatalytically by cyclization and dehydration of residues Ala-Ser-Gly.

Its subcellular location is the cytoplasm. It carries out the reaction L-histidine = trans-urocanate + NH4(+). The protein operates within amino-acid degradation; L-histidine degradation into L-glutamate; N-formimidoyl-L-glutamate from L-histidine: step 1/3. This Cereibacter sphaeroides (strain ATCC 17023 / DSM 158 / JCM 6121 / CCUG 31486 / LMG 2827 / NBRC 12203 / NCIMB 8253 / ATH 2.4.1.) (Rhodobacter sphaeroides) protein is Histidine ammonia-lyase.